Consider the following 349-residue polypeptide: MASKKVCIVGSGNWGSAIAKIVGGNAAQLAQFDPRVTMWVFEEDIGGKKLTEIINTQHENVKYLPGHKLPPNVVAVPDVVQAAEDADILIFVVPHQFIGKICDQLKGHLKANATGISLIKGVDEGPNGLKLISEVIGERLGIPMSVLMGANIASEVADEKFCETTIGCKDPAQGQLLKELMQTPNFRITVVQEVDTVEICGALKNVVAVGAGFCDGLGFGDNTKAAVIRLGLMEMIAFAKLFCSGPVSSATFLESCGVADLITTCYGGRNRKVAEAFARTGKSIEQLEKELLNGQKLQGPETARELYSILQHKGLVDKFPLFMAVYKVCYEGQPVGEFIHCLQNHPEHM.

NAD(+) is bound by residues 10–15 (GSGNWG), phenylalanine 41, and phenylalanine 97. Residue lysine 120 coordinates substrate. An NAD(+)-binding site is contributed by alanine 153. Serine 154 is subject to Phosphoserine. The Proton acceptor role is filled by lysine 204. NAD(+) is bound at residue arginine 269. 269-270 (RN) provides a ligand contact to substrate. Lysine 289 is subject to N6-succinyllysine. The NAD(+) site is built by lysine 296 and glutamine 298. Tyrosine 326 is modified (phosphotyrosine).

This sequence belongs to the NAD-dependent glycerol-3-phosphate dehydrogenase family. Homodimer. In terms of tissue distribution, expressed in liver (at protein level).

The protein resides in the cytoplasm. The catalysed reaction is sn-glycerol 3-phosphate + NAD(+) = dihydroxyacetone phosphate + NADH + H(+). With respect to regulation, inhibited by zinc ions and sulfate. Functionally, has glycerol-3-phosphate dehydrogenase activity. In Homo sapiens (Human), this protein is Glycerol-3-phosphate dehydrogenase [NAD(+)], cytoplasmic.